The primary structure comprises 642 residues: Chaperone protein HtpG (642 aa).

An a; substrate-binding region spans residues 1–349 (MSAATETEVR…SADLPLNVSR (349 aa)). Residues 216–238 (ELPPAPPAKEGEEPEPPKTPEWE) are disordered. A compositionally biased stretch (basic and acidic residues) spans 224–236 (KEGEEPEPPKTPE). The tract at residues 350-570 (EILQQNRQVE…AHDMSATLER (221 aa)) is b. The tract at residues 571–642 (LLKEAGQEVP…VKRLNKLLMG (72 aa)) is c.

The protein belongs to the heat shock protein 90 family. As to quaternary structure, homodimer.

It is found in the cytoplasm. In terms of biological role, molecular chaperone. Has ATPase activity. This is Chaperone protein HtpG from Magnetococcus marinus (strain ATCC BAA-1437 / JCM 17883 / MC-1).